Reading from the N-terminus, the 368-residue chain is Phosphate acyltransferase (368 aa).

The interval 338–368 (GDGGHDAGGAGTASPAPGHHAEPSAAQSSKA) is disordered.

It belongs to the PlsX family. As to quaternary structure, homodimer. Probably interacts with PlsY.

It is found in the cytoplasm. It carries out the reaction a fatty acyl-[ACP] + phosphate = an acyl phosphate + holo-[ACP]. It functions in the pathway lipid metabolism; phospholipid metabolism. Catalyzes the reversible formation of acyl-phosphate (acyl-PO(4)) from acyl-[acyl-carrier-protein] (acyl-ACP). This enzyme utilizes acyl-ACP as fatty acyl donor, but not acyl-CoA. The polypeptide is Phosphate acyltransferase (Burkholderia ambifaria (strain MC40-6)).